The chain runs to 147 residues: MVHLTGEEKAAVTGLWSKVNVDEVGGEALGRLLVVYPWTQRFFDSFGDLSTPDAVMNNPKVKAHGKKVLNSFSEGLKNLDNLKGTFVKLSELHCDKLHVDPENFKLLGNVLVCVLAHHFGKEFTPQVQAAYQKVVAGVANALAHKYH.

The region spanning 3 to 147 (HLTGEEKAAV…VANALAHKYH (145 aa)) is the Globin domain. Heme b contacts are provided by H64 and H93.

It belongs to the globin family. In terms of assembly, heterotetramer of two delta chains and two alpha chains. In terms of tissue distribution, red blood cells.

This chain is Hemoglobin subunit delta (HBD), found in Ailuropoda melanoleuca (Giant panda).